The chain runs to 233 residues: Glucosamine-6-phosphate deaminase (233 aa).

Residue Asp-62 is the Proton acceptor; for enolization step of the active site. The For ring-opening step role is filled by Asn-128. The active-site Proton acceptor; for ring-opening step is the His-130. Glu-135 (for ring-opening step) is an active-site residue.

It belongs to the glucosamine/galactosamine-6-phosphate isomerase family. NagB subfamily.

The enzyme catalyses alpha-D-glucosamine 6-phosphate + H2O = beta-D-fructose 6-phosphate + NH4(+). It participates in amino-sugar metabolism; N-acetylneuraminate degradation; D-fructose 6-phosphate from N-acetylneuraminate: step 5/5. Its function is as follows. Catalyzes the reversible isomerization-deamination of glucosamine 6-phosphate (GlcN6P) to form fructose 6-phosphate (Fru6P) and ammonium ion. The polypeptide is Glucosamine-6-phosphate deaminase (Streptococcus pneumoniae serotype 4 (strain ATCC BAA-334 / TIGR4)).